A 227-amino-acid chain; its full sequence is MACTKTLQQSQPISAGATTTTTAVAPAGGHSGSTECDLECLVCREPYSCPRLPKLLACQHAFCAICLKLLLCVQDNTWSITCPLCRKVTAVPGGLICSLRDHEAVVGQLAQPCTEVSLCPQGLVDPADLAAGHPSLVGEDGQDEVSANHVAARRLAAHLLLLALLIILIGPFIYPGVLRWVLTFIIALALLMSTLFCCLPSTRGSCWPSSRTLFCREQKHSHISSIA.

Residues 40-86 (CLVCREPYSCPRLPKLLACQHAFCAICLKLLLCVQDNTWSITCPLCR) form an RING-type zinc finger. 2 helical membrane passes run 158-178 (HLLLLALLIILIGPFIYPGVL) and 180-200 (WVLTFIIALALLMSTLFCCLP).

Interacts with BNIP1. Polyubiquitinated. 'Lys-29'-linked autoubiquitination leads to proteasomal degradation.

The protein resides in the endoplasmic reticulum membrane. The catalysed reaction is S-ubiquitinyl-[E2 ubiquitin-conjugating enzyme]-L-cysteine + [acceptor protein]-L-lysine = [E2 ubiquitin-conjugating enzyme]-L-cysteine + N(6)-ubiquitinyl-[acceptor protein]-L-lysine.. Its pathway is protein modification; protein ubiquitination. In terms of biological role, E3 ubiquitin protein ligase that is part of an apoptotic signaling pathway activated by endoplasmic reticulum stress. Stimulates the expression of proteins specific of the unfolded protein response (UPR), ubiquitinates BNIP1 and regulates its localization to the mitochondrion and induces calcium release from the endoplasmic reticulum that ultimately leads to cell apoptosis. Plays a role in the maintenance of intestinal homeostasis and clearance of enteric pathogens. Upon NOD2 stimulation, ubiquitinates the ER stress sensor activating transcription factor 6/ATF6 and promotes the unfolded protein response UPR. Participates in basal level of autophagy maintenance by regulating the ubiquitination of EPHB2 and EPHB3. Upon stimulation by ligand EFNB1, ubiquitinates EPHB2 and further recruits MAP1LC3B for autophagy induction. Controls nutrient sensing by ubiquitinating Sestrin-2/SESN2, which is an intracellular sensor of cytosolic leucine and inhibitor of mTORC1 activity. In Homo sapiens (Human), this protein is E3 ubiquitin-protein ligase RNF186.